Reading from the N-terminus, the 1458-residue chain is ABC multidrug transporter B (1458 aa).

The next 5 helical transmembrane spans lie at 30–50, 70–90, 102–122, 128–148, and 165–185; these read FSLL…VLII, LLWA…VLAV, ASIA…LLSC, STTP…FDIA, and IAIL…LEAV. N-linked (GlcNAc...) asparagine glycosylation is present at N208. Residues 273-295 traverse the membrane as a helical segment; it reads WPLLSAVPPRACLAALNFCQPLL. The region spanning 283–561 is the ABC transmembrane type-1 1 domain; the sequence is ACLAALNFCQ…LVMALMTFVG (279 aa). Residue N309 is glycosylated (N-linked (GlcNAc...) asparagine). 5 consecutive transmembrane segments (helical) span residues 314–334, 387–407, 411–431, 501–521, and 541–561; these read IGYG…VTMG, WQTI…IYLL, LGVA…GCLI, LGWT…YGIM, and LFAL…TFVG. The ABC transporter 1 domain maps to 626–853; that stretch reads LTVKNATFAW…AGGYVSSFGL (228 aa). N-linked (GlcNAc...) asparagine glycosylation is present at N630. Residue 660-667 participates in ATP binding; sequence GPSGCGKS. N-linked (GlcNAc...) asparagine glycosylation is found at N702, N804, and N879. The region spanning 933–1182 is the ABC transmembrane type-1 2 domain; that stretch reads PNGRTGYYLG…LVTFWTNLET (250 aa). A run of 6 helical transmembrane segments spans residues 940-960, 978-998, 1016-1036, 1040-1060, 1125-1145, and 1156-1176; these read YLGI…IGCW, LLAT…SGSI, AAIN…LMGI, YAAI…KVYL, LTLT…VLVV, and VGVA…LVTF. An ABC transporter 2 domain is found at 1219–1449; it reads IEFKSVSAEY…EGSYFSRLYA (231 aa). 1252-1259 is a binding site for ATP; the sequence is GRTGSGKT. N1316 carries N-linked (GlcNAc...) asparagine glycosylation.

This sequence belongs to the ABC transporter superfamily. ABCC family. Conjugate transporter (TC 3.A.1.208) subfamily.

The protein localises to the cell membrane. In terms of biological role, pleiotropic ABC efflux transporter that may be involved in A.fumigatus adaptation to azoles such as vorizonazole. This chain is ABC multidrug transporter B, found in Aspergillus fumigatus (strain ATCC MYA-4609 / CBS 101355 / FGSC A1100 / Af293) (Neosartorya fumigata).